The chain runs to 98 residues: UPF0235 protein Asuc_1977 (98 aa).

It belongs to the UPF0235 family.

In Actinobacillus succinogenes (strain ATCC 55618 / DSM 22257 / CCUG 43843 / 130Z), this protein is UPF0235 protein Asuc_1977.